Here is a 257-residue protein sequence, read N- to C-terminus: Type III pantothenate kinase (257 aa).

6–13 contributes to the ATP binding site; it reads DVGNTNTV. Substrate contacts are provided by residues Tyr102 and 109-112; that span reads GADR. Catalysis depends on Asp111, which acts as the Proton acceptor. A K(+)-binding site is contributed by Asp131. Residue Thr134 participates in ATP binding. Residue Thr186 coordinates substrate.

The protein belongs to the type III pantothenate kinase family. As to quaternary structure, homodimer. The cofactor is NH4(+). K(+) is required as a cofactor.

Its subcellular location is the cytoplasm. The enzyme catalyses (R)-pantothenate + ATP = (R)-4'-phosphopantothenate + ADP + H(+). It participates in cofactor biosynthesis; coenzyme A biosynthesis; CoA from (R)-pantothenate: step 1/5. Its function is as follows. Catalyzes the phosphorylation of pantothenate (Pan), the first step in CoA biosynthesis. In Leptospira borgpetersenii serovar Hardjo-bovis (strain JB197), this protein is Type III pantothenate kinase.